We begin with the raw amino-acid sequence, 518 residues long: Calcium and calcium/calmodulin-dependent serine/threonine-protein kinase (518 aa).

Positions 13-300 (YEISEILGRG…AQELLSHPWV (288 aa)) constitute a Protein kinase domain. Residues 19-27 (LGRGGFSVV) and lysine 44 contribute to the ATP site. Aspartate 165 serves as the catalytic Proton acceptor. Threonine 265 is subject to Phosphothreonine. The tract at residues 323–336 (ARRKLRAAAIASVW) is calmodulin-binding. Residues 344–365 (TKKLRSLVGTYDLKEEEIESLR) are a coiled coil. 3 consecutive EF-hand domains span residues 394 to 429 (SLIP…LKNS), 430 to 465 (KGDD…LPEE), and 472 to 507 (TEPG…DSSL). Residues aspartate 407, asparagine 409, aspartate 411, threonine 413, glutamate 418, aspartate 443, aspartate 445, serine 447, cysteine 449, glutamate 454, aspartate 485, asparagine 487, aspartate 489, lysine 491, and glutamate 496 each contribute to the Ca(2+) site.

Belongs to the protein kinase superfamily. CAMK Ser/Thr protein kinase family. CaMK subfamily. Interacts with IPD3. Interacts with CIP73. Post-translationally, autophosphorylation stimulated by calcium. Occurs probably by an intermolecular mechanism. In terms of tissue distribution, mainly expressed in roots and nodules. Detected in leaves, stems and cotyledons.

It localises to the nucleus. The catalysed reaction is L-seryl-[protein] + ATP = O-phospho-L-seryl-[protein] + ADP + H(+). It catalyses the reaction L-threonyl-[protein] + ATP = O-phospho-L-threonyl-[protein] + ADP + H(+). Its activity is regulated as follows. Activated by calcium/calmodulin binding after calcium-induced autophosphorylation. Calcium- and calmodulin-dependent protein kinase necessary and sufficient for dedifferentiation of root cortical cells into nodule initials. Not required for calcium spiking. Acts as central regulator of the nodule organogenesis program. Required for root hair curling and infection thread (IT) formation upon rhizobial infection, and arbuscule formation during arbuscular mycorrhiza (AM) fungal infection. Phosphorylates the downstream target IPD3, a protein required for root infection by symbiotic rhizobia and AM fungi. Phosphorylates the downstream target CIP73, a protein required for root nodule organogenesis. Mediates the phosphorylation of leghemoglobins (e.g. LB1) to modulate their oxygen O(2) affinity, thus regulating the diffusion of oxygen to the bacteroids in nodules. In Lotus japonicus (Lotus corniculatus var. japonicus), this protein is Calcium and calcium/calmodulin-dependent serine/threonine-protein kinase.